A 41-amino-acid polypeptide reads, in one-letter code: Ornatin-A2 (41 aa).

Positions 33-35 (RGD) match the Cell attachment site motif.

Belongs to the ornatin family.

Its subcellular location is the secreted. In terms of biological role, potent inhibitor of fibrinogen interaction with platelet receptors expressed on glycoprotein IIb-IIIa complex. May prevent blood from clotting during either feeding and/or storage of ingested blood. This is Ornatin-A2 from Placobdella ornata (Turtle leech).